Here is a 61-residue protein sequence, read N- to C-terminus: Large ribosomal subunit protein uL30 (61 aa).

This sequence belongs to the universal ribosomal protein uL30 family. As to quaternary structure, part of the 50S ribosomal subunit.

The polypeptide is Large ribosomal subunit protein uL30 (Lacticaseibacillus casei (strain BL23) (Lactobacillus casei)).